The chain runs to 332 residues: Thiamine-binding periplasmic protein (332 aa).

The first 20 residues, 1–20 (MKLLKLTLISTALFSTAALA), serve as a signal peptide directing secretion. Thiamine contacts are provided by residues Trp-202 and 220–223 (YSTS).

Belongs to the bacterial solute-binding protein 1 family. The complex is composed of two ATP-binding proteins (ThiQ), two transmembrane proteins (ThiP) and a solute-binding protein (ThiB).

The protein resides in the periplasm. Functionally, part of the ABC transporter complex ThiBPQ involved in thiamine import. The protein is Thiamine-binding periplasmic protein (thiB) of Haemophilus influenzae (strain ATCC 51907 / DSM 11121 / KW20 / Rd).